The following is a 111-amino-acid chain: Cytochrome bo(3) ubiquinol oxidase subunit 4 (111 aa).

Over 1–17 (MSSAAHDNHGAGHGSLG) the chain is Cytoplasmic. The helical transmembrane segment at 18 to 38 (SYAIGFVLSVILTAIPFYMVM) threads the bilayer. Residues 39–46 (DGGFSRHA) lie on the Periplasmic side of the membrane. Residues 47–67 (TILTMVVLGLVQVVVHLICFL) form a helical membrane-spanning segment. The Cytoplasmic portion of the chain corresponds to 68–80 (HMNMSSEGRWNVM). Residues 81–101 (AFIFTVIVILLVVGLSLWIIF) traverse the membrane as a helical segment. Residues 102 to 111 (SADMLMMPMP) lie on the Periplasmic side of the membrane.

It belongs to the cytochrome c oxidase bacterial subunit 4 family. As to quaternary structure, heterooctamer of two A chains, two B chains, two C chains and two D chains.

It localises to the cell inner membrane. In terms of biological role, cytochrome bo(3) ubiquinol terminal oxidase is the component of the aerobic respiratory chain of E.coli that predominates when cells are grown at high aeration. Has proton pump activity across the membrane in addition to electron transfer, pumping 2 protons/electron. In Pseudomonas aeruginosa (strain ATCC 15692 / DSM 22644 / CIP 104116 / JCM 14847 / LMG 12228 / 1C / PRS 101 / PAO1), this protein is Cytochrome bo(3) ubiquinol oxidase subunit 4 (cyoD).